A 940-amino-acid chain; its full sequence is Isoleucine--tRNA ligase (940 aa).

Residues 58 to 68 (PYANGSIHIGH) carry the 'HIGH' region motif. E564 lines the L-isoleucyl-5'-AMP pocket. Residues 605-609 (KMSKS) carry the 'KMSKS' region motif. K608 serves as a coordination point for ATP. C903, C906, C923, and C926 together coordinate Zn(2+).

This sequence belongs to the class-I aminoacyl-tRNA synthetase family. IleS type 1 subfamily. In terms of assembly, monomer. Zn(2+) is required as a cofactor.

Its subcellular location is the cytoplasm. It carries out the reaction tRNA(Ile) + L-isoleucine + ATP = L-isoleucyl-tRNA(Ile) + AMP + diphosphate. Its function is as follows. Catalyzes the attachment of isoleucine to tRNA(Ile). As IleRS can inadvertently accommodate and process structurally similar amino acids such as valine, to avoid such errors it has two additional distinct tRNA(Ile)-dependent editing activities. One activity is designated as 'pretransfer' editing and involves the hydrolysis of activated Val-AMP. The other activity is designated 'posttransfer' editing and involves deacylation of mischarged Val-tRNA(Ile). In Shewanella amazonensis (strain ATCC BAA-1098 / SB2B), this protein is Isoleucine--tRNA ligase.